A 425-amino-acid polypeptide reads, in one-letter code: 3-phosphoshikimate 1-carboxyvinyltransferase (425 aa).

3-phosphoshikimate contacts are provided by K22, S23, and R27. K22 contributes to the phosphoenolpyruvate binding site. Positions 95 and 123 each coordinate phosphoenolpyruvate. Residues S169, S170, Q171, S197, D313, N336, and K340 each coordinate 3-phosphoshikimate. Phosphoenolpyruvate is bound at residue Q171. D313 acts as the Proton acceptor in catalysis. Phosphoenolpyruvate-binding residues include R344, R386, and K411.

It belongs to the EPSP synthase family. As to quaternary structure, monomer.

It localises to the cytoplasm. It carries out the reaction 3-phosphoshikimate + phosphoenolpyruvate = 5-O-(1-carboxyvinyl)-3-phosphoshikimate + phosphate. It functions in the pathway metabolic intermediate biosynthesis; chorismate biosynthesis; chorismate from D-erythrose 4-phosphate and phosphoenolpyruvate: step 6/7. Its function is as follows. Catalyzes the transfer of the enolpyruvyl moiety of phosphoenolpyruvate (PEP) to the 5-hydroxyl of shikimate-3-phosphate (S3P) to produce enolpyruvyl shikimate-3-phosphate and inorganic phosphate. In Pseudoalteromonas translucida (strain TAC 125), this protein is 3-phosphoshikimate 1-carboxyvinyltransferase.